A 417-amino-acid polypeptide reads, in one-letter code: RH-like protein ID (417 aa).

A run of 11 helical transmembrane segments spans residues 12-32 (CLPL…YFFT), 44-64 (LVAS…GFGF), 77-97 (VAFN…LDGF), 125-145 (ISAG…MVLV), 172-192 (IYVF…KPLA), 203-223 (TIPS…WPSF), 238-258 (VFNT…VSSL), 265-285 (INMT…ATSC), 287-307 (LIPS…ISIG), 331-351 (NFSL…VLDT), and 358-378 (MVGF…VIAL).

The protein belongs to the ammonium transporter (TC 2.A.49) family. Rh subfamily.

It is found in the membrane. In terms of biological role, may be part of an oligomeric complex which is likely to have a transport or channel function in the erythrocyte membrane. In Gorilla gorilla gorilla (Western lowland gorilla), this protein is RH-like protein ID.